We begin with the raw amino-acid sequence, 157 residues long: S-ribosylhomocysteine lyase (157 aa).

Fe cation contacts are provided by His60, His64, and Cys127.

It belongs to the LuxS family. In terms of assembly, homodimer. Fe cation serves as cofactor.

The catalysed reaction is S-(5-deoxy-D-ribos-5-yl)-L-homocysteine = (S)-4,5-dihydroxypentane-2,3-dione + L-homocysteine. Involved in the synthesis of autoinducer 2 (AI-2) which is secreted by bacteria and is used to communicate both the cell density and the metabolic potential of the environment. The regulation of gene expression in response to changes in cell density is called quorum sensing. Catalyzes the transformation of S-ribosylhomocysteine (RHC) to homocysteine (HC) and 4,5-dihydroxy-2,3-pentadione (DPD). The polypeptide is S-ribosylhomocysteine lyase (Helicobacter acinonychis (strain Sheeba)).